The sequence spans 348 residues: VIP36-like protein (348 aa).

The first 38 residues, 1–38, serve as a signal peptide directing secretion; that stretch reads MAVALGPSGWWQRWRRRLSAREVSRMLLLLLLLGSGQG. At 39–313 the chain is on the lumenal side; sequence PRQVGAGQTF…APLPPLSGLA (275 aa). The region spanning 49–274 is the L-type lectin-like domain; the sequence is EYLKREHSLS…DVISLKLFEL (226 aa). Residues serine 93 and aspartate 128 each coordinate a carbohydrate. Aspartate 159, tyrosine 161, and asparagine 163 together coordinate Ca(2+). A carbohydrate is bound by residues tyrosine 161 and asparagine 163. N-linked (GlcNAc...) asparagine glycosylation occurs at asparagine 181. Histidine 188 contacts a carbohydrate. Aspartate 191 is a binding site for Ca(2+). Cysteine 200 and cysteine 237 are disulfide-bonded. An a carbohydrate-binding site is contributed by 258–260; the sequence is GDL. The helical transmembrane segment at 314 to 334 threads the bilayer; it reads LFLIVFFSLVFSVFAIVIGII. At 335–348 the chain is on the cytoplasmic side; the sequence is LYNKWQDQSRKRFY. Positions 344-346 match the Endoplasmic reticulum retention signal motif; it reads RKR.

It is found in the endoplasmic reticulum membrane. The protein localises to the golgi apparatus membrane. May be involved in the regulation of export from the endoplasmic reticulum of a subset of glycoproteins. May function as a regulator of ERGIC-53. This chain is VIP36-like protein (LMAN2L), found in Bos taurus (Bovine).